Here is a 299-residue protein sequence, read N- to C-terminus: 33 kDa chaperonin (299 aa).

2 disulfide bridges follow: Cys240/Cys242 and Cys273/Cys276.

Belongs to the HSP33 family. Under oxidizing conditions two disulfide bonds are formed involving the reactive cysteines. Under reducing conditions zinc is bound to the reactive cysteines and the protein is inactive.

Its subcellular location is the cytoplasm. Its function is as follows. Redox regulated molecular chaperone. Protects both thermally unfolding and oxidatively damaged proteins from irreversible aggregation. Plays an important role in the bacterial defense system toward oxidative stress. The polypeptide is 33 kDa chaperonin (Gloeothece citriformis (strain PCC 7424) (Cyanothece sp. (strain PCC 7424))).